Consider the following 467-residue polypeptide: Envelope glycoprotein M (467 aa).

Topologically, residues 1–32 are intravirion; sequence MGRRAPRGSPEAAPGADVAPGARAAWWVWCVQ. A helical membrane pass occupies residues 33–53; it reads VATFIVSAICVVGLLVLASVF. At 54–90 the chain is on the virion surface side; that stretch reads RDRFPCLYAPATSYAKANATVEVRGGVAVPLRLDTQS. Residues 91–111 form a helical membrane-spanning segment; it reads LLATYAITSTLLLAAAVYAAV. Residues 112-137 lie on the Intravirion side of the membrane; it reads GAVTSRYERALDAARRLAAARMAMPH. The helical transmembrane segment at 138–158 threads the bilayer; the sequence is ATLIAGNVCAWLLQITVLLLA. Topologically, residues 159–163 are virion surface; that stretch reads HRISQ. A helical transmembrane segment spans residues 164-184; it reads LAHLIYVLHFACLVYLAAHFC. Residues 185 to 220 are Intravirion-facing; that stretch reads TRGVLSGTYLRQVHGLIDPAPTHHRIVGPVRAVMTN. Residues 221–241 form a helical membrane-spanning segment; it reads ALLLGTLLCTAAAAVSLNTIA. The Virion surface segment spans residues 242–250; that stretch reads ALNFNFSAP. A helical transmembrane segment spans residues 251-271; that stretch reads SMLICLTTLFALLVVSLLLVV. Topologically, residues 272-280 are intravirion; the sequence is EGVLCHYVR. The chain crosses the membrane as a helical span at residues 281–301; sequence VLVGPHLGAIAATGIVGLACE. At 302-318 the chain is on the virion surface side; it reads HYHTGGYYVVEQQWPGA. Residues 319 to 339 form a helical membrane-spanning segment; it reads QTGVRVALALVAAFALAMAVL. Residues 340 to 467 lie on the Intravirion side of the membrane; the sequence is RCTRAYLYHR…EPVYSTVRRW (128 aa). Basic residues predominate over residues 371-381; that stretch reads RRVRSSMRGSR. 2 disordered regions span residues 371 to 395 and 432 to 459; these read RRVR…AETP and VQRP…AGEP.

This sequence belongs to the herpesviridae glycoprotein M family. In terms of assembly, interacts (via N-terminus) with gN (via N-terminus). The gM-gN heterodimer forms the gCII complex.

Its subcellular location is the virion membrane. The protein localises to the host Golgi apparatus. It localises to the host trans-Golgi network. The protein resides in the host endosome membrane. It is found in the host nucleus inner membrane. Functionally, envelope glycoprotein important for virion assembly and egress. Plays a role in the correct incorporation of gH-gL into virion membrane. Directs the glycoprotein N (gN) to the host trans-Golgi network. The sequence is that of Envelope glycoprotein M from Human herpesvirus 2 (strain HG52) (HHV-2).